Here is a 390-residue protein sequence, read N- to C-terminus: GTPase Obg (390 aa).

Residues 1–159 form the Obg domain; sequence MKFVDEAVVK…REIRLELLLL (159 aa). In terms of domain architecture, OBG-type G spans 160–333; it reads ADVGMLGLPN…LCYKLADFME (174 aa). GTP contacts are provided by residues 166–173, 191–195, 213–216, 283–286, and 314–316; these read GLPNAGKS, FTTLI, DIPG, NKVD, and SAI. Mg(2+)-binding residues include serine 173 and threonine 193. Positions 367-382 are enriched in acidic residues; that stretch reads TEDDDDWDDWDDEEDD. Positions 367–390 are disordered; sequence TEDDDDWDDWDDEEDDGHVVYVRD.

Belongs to the TRAFAC class OBG-HflX-like GTPase superfamily. OBG GTPase family. Monomer. Mg(2+) serves as cofactor.

The protein localises to the cytoplasm. Its function is as follows. An essential GTPase which binds GTP, GDP and possibly (p)ppGpp with moderate affinity, with high nucleotide exchange rates and a fairly low GTP hydrolysis rate. Plays a role in control of the cell cycle, stress response, ribosome biogenesis and in those bacteria that undergo differentiation, in morphogenesis control. The chain is GTPase Obg from Vibrio parahaemolyticus serotype O3:K6 (strain RIMD 2210633).